A 343-amino-acid polypeptide reads, in one-letter code: Beta-ketoacyl-[acyl-carrier-protein] synthase III 1 (343 aa).

Catalysis depends on residues Cys-122 and His-268. Residues Gln-269–Arg-273 form an ACP-binding region. Residue Asn-299 is part of the active site.

The protein belongs to the thiolase-like superfamily. FabH family. Homodimer.

The protein localises to the cytoplasm. The enzyme catalyses malonyl-[ACP] + acetyl-CoA + H(+) = 3-oxobutanoyl-[ACP] + CO2 + CoA. The protein operates within lipid metabolism; fatty acid biosynthesis. Functionally, essential enzyme that catalyzes the condensation reaction of fatty acid synthesis by the addition to an acyl acceptor of two carbons from malonyl-ACP. Catalyzes the first condensation reaction which initiates fatty acid synthesis and may therefore play a role in governing the total rate of fatty acid production. Possesses both acetoacetyl-ACP synthase and acetyl transacylase activities. Its substrate specificity determines the biosynthesis of branched-chain of fatty acids. This is Beta-ketoacyl-[acyl-carrier-protein] synthase III 1 from Streptomyces coelicolor (strain ATCC BAA-471 / A3(2) / M145).